We begin with the raw amino-acid sequence, 415 residues long: L-cysteine:1D-myo-inositol 2-amino-2-deoxy-alpha-D-glucopyranoside ligase (415 aa).

Position 43 (Cys43) interacts with Zn(2+). L-cysteinyl-5'-AMP is bound by residues 43–46 (CGIT), Thr58, and 81–83 (NIT). The 'HIGH' region motif lies at 45–55 (ITPYDATHLGH). Positions 187 to 192 (ERGGDP) match the 'ERGGDP' region motif. Trp227 contacts L-cysteinyl-5'-AMP. Cys231 is a binding site for Zn(2+). 249–251 (GSD) provides a ligand contact to L-cysteinyl-5'-AMP. His256 serves as a coordination point for Zn(2+). Ile283 lines the L-cysteinyl-5'-AMP pocket. Residues 289-293 (KMSKS) carry the 'KMSKS' region motif.

Belongs to the class-I aminoacyl-tRNA synthetase family. MshC subfamily. Monomer. The cofactor is Zn(2+).

The catalysed reaction is 1D-myo-inositol 2-amino-2-deoxy-alpha-D-glucopyranoside + L-cysteine + ATP = 1D-myo-inositol 2-(L-cysteinylamino)-2-deoxy-alpha-D-glucopyranoside + AMP + diphosphate + H(+). Catalyzes the ATP-dependent condensation of GlcN-Ins and L-cysteine to form L-Cys-GlcN-Ins. The chain is L-cysteine:1D-myo-inositol 2-amino-2-deoxy-alpha-D-glucopyranoside ligase from Mycobacterium sp. (strain JLS).